The sequence spans 826 residues: MLRMTPLASAIVALLLGIEAYAAEETFDTHFMIGGMKDQQVANIRLDDNQPLPGQYDIDIYVNKQWRGKYEIIVKDNPQETCLSREVIKRLGINSDNFASGKQCLTFEQLVQGGSYTWDIGVFRLDFSVPQAWVEELESGYVPPENWERGINAFYTSYYLSQYYSDYKASGNNKSTYVRFNSGLNLLGWQLHSDASFSKTNNNPGVWKSNTLYLERGFAQLLGTLRVGDMYTSSDIFDSVRFRGVRLFRDMQMLPNSKQNFTPRVQGIAQSNALVTIEQNGFVVYQKEVPPGPFAITDLQLAGGGADLDVSVKEADGSVTTYLVPYAAVPNMLQPGVSKYDLAAGRSHIEGASKQSDFVQAGYQYGFNNLLTLYGGSMVANNYYAFTLGAGWNTRIGAISVDATKSHSKQDNGDVFDGQSYQIAYNKFVSQTSTRFGLAAWRYSSRDYRTFNDHVWANNKDNYRRDENDVYDIADYYQNDFGRKNSFSANMSQSLPEGWGSVSLSTLWRDYWGRSGSSKDYQLSYSNNLRRISYTLAASQAYDENHHEEKRFNIFISIPFDWGDDVSTPRRQIYMSNSTTFDDQGFASNNTGLSGTVGSRDQFNYGVNLSHQHQGNETTAGANLTWNAPVATVNGSYSQSSTYRQAGASVSGGIVAWSGGVNLANRLSETFAVMNAPGIKDAYVNGQKYRTTNRNGVVIYDGMTPYRENHLMLDVSQSDSEAELRGNRKIAAPYRGAVVLVNFDTDQRKPWFIKALRADGQSLTFGYEVNDIHGHNIGVVGQGSQLFIRTNEVPPSVNVAIDKQQGLSCTITFGKEIDESRNYICQ.

The N-terminal stretch at Met-1–Ala-22 is a signal peptide. Cys-809 and Cys-825 are disulfide-bonded.

The protein belongs to the fimbrial export usher family.

The protein localises to the cell outer membrane. In terms of biological role, part of the yehABCD fimbrial operon. Could contribute to adhesion to various surfaces in specific environmental niches. Probably involved in the export and assembly of fimbrial subunits across the outer membrane. In Escherichia coli (strain K12), this protein is Outer membrane usher protein YehB (yehB).